Here is a 416-residue protein sequence, read N- to C-terminus: S-adenosylmethionine synthase (416 aa).

ATP is bound at residue histidine 14. Residue aspartate 16 participates in Mg(2+) binding. Glutamate 42 is a K(+) binding site. Residues glutamate 55 and glutamine 98 each coordinate L-methionine. Positions 98–108 are flexible loop; the sequence is QSADINQGVDR. Residues 164-166, 240-241, aspartate 249, 255-256, alanine 272, and lysine 276 each bind ATP; these read DAK, KF, and RK. Residue aspartate 249 coordinates L-methionine. L-methionine is bound at residue lysine 280.

It belongs to the AdoMet synthase family. Homotetramer; dimer of dimers. It depends on Mg(2+) as a cofactor. Requires K(+) as cofactor.

It localises to the cytoplasm. It catalyses the reaction L-methionine + ATP + H2O = S-adenosyl-L-methionine + phosphate + diphosphate. It participates in amino-acid biosynthesis; S-adenosyl-L-methionine biosynthesis; S-adenosyl-L-methionine from L-methionine: step 1/1. Its function is as follows. Catalyzes the formation of S-adenosylmethionine (AdoMet) from methionine and ATP. The overall synthetic reaction is composed of two sequential steps, AdoMet formation and the subsequent tripolyphosphate hydrolysis which occurs prior to release of AdoMet from the enzyme. The chain is S-adenosylmethionine synthase from Flavobacterium johnsoniae (strain ATCC 17061 / DSM 2064 / JCM 8514 / BCRC 14874 / CCUG 350202 / NBRC 14942 / NCIMB 11054 / UW101) (Cytophaga johnsonae).